We begin with the raw amino-acid sequence, 218 residues long: Peroxynitrite isomerase 2 (218 aa).

Residues 1–24 (MTPAGDTPERGSGDRAVAEAAERA) form a disordered region. A compositionally biased stretch (basic and acidic residues) spans 7–24 (TPERGSGDRAVAEAAERA). The GXWXGXG motif lies at 65-71 (GVWRGEG). The heme b site is built by Lys181 and His208.

It belongs to the nitrobindin family. Homodimer. Requires heme b as cofactor.

The catalysed reaction is peroxynitrite = nitrate. Its pathway is nitrogen metabolism. Heme-binding protein able to scavenge peroxynitrite and to protect free L-tyrosine against peroxynitrite-mediated nitration, by acting as a peroxynitrite isomerase that converts peroxynitrite to nitrate. Therefore, this protein likely plays a role in peroxynitrite sensing and in the detoxification of reactive nitrogen and oxygen species (RNS and ROS, respectively). Is able to bind nitric oxide (NO) in vitro, but may act as a sensor of peroxynitrite levels in vivo. This is Peroxynitrite isomerase 2 from Mycolicibacterium smegmatis (strain ATCC 700084 / mc(2)155) (Mycobacterium smegmatis).